Consider the following 277-residue polypeptide: Myelin proteolipid protein (277 aa).

The Cytoplasmic portion of the chain corresponds to 1-10 (MGLLECCARC). 3 S-palmitoyl cysteine lipidation sites follow: cysteine 6, cysteine 7, and cysteine 10. The helical transmembrane segment at 11–36 (LVGAPFASLVATGLCFFGVALFCGCG) threads the bilayer. At 37–59 (HEALTGTEKLIETYFSKNYQDYE) the chain is on the extracellular side. The helical transmembrane segment at 60–88 (YLINVIHAFQYVIYGTASFFFLYGALLLA) threads the bilayer. Residues 89–151 (EGFYTTGAVR…LGKWLGHPDK (63 aa)) are Cytoplasmic-facing. A lipid anchor (S-palmitoyl cysteine) is attached at cysteine 109. Phosphoserine is present on serine 114. 2 positions are modified to phosphothreonine: threonine 116 and threonine 118. Cysteine 141 carries the S-palmitoyl cysteine lipid modification. The helical transmembrane segment at 152–178 (FVGITYALTVVWLLVFACSAVPVYIYF) threads the bilayer. The Extracellular portion of the chain corresponds to 179-238 (NTWTTCQSIAFPSKTSASIGSLCADARMYGVLPWNAFPGKVCGSNLLSICKTAEFQMTFH). Cystine bridges form between cysteine 184–cysteine 228 and cysteine 201–cysteine 220. The O-palmitoyl serine moiety is linked to residue serine 199. A helical transmembrane segment spans residues 239–268 (LFIAAFVGAAATLISLLTFMIAATYNFAVL). The Cytoplasmic segment spans residues 269 to 277 (KLMGRGTKF).

It belongs to the myelin proteolipid protein family.

The protein localises to the cell membrane. The protein resides in the myelin membrane. Its function is as follows. This is the major myelin protein from the central nervous system. It plays an important role in the formation or maintenance of the multilamellar structure of myelin. In Macaca fascicularis (Crab-eating macaque), this protein is Myelin proteolipid protein (PLP1).